Consider the following 293-residue polypeptide: Elongation factor Ts (293 aa).

Residues 79-82 (TDFV) are involved in Mg(2+) ion dislocation from EF-Tu. Phosphoserine is present on Ser149.

Belongs to the EF-Ts family.

The protein localises to the cytoplasm. Its function is as follows. Associates with the EF-Tu.GDP complex and induces the exchange of GDP to GTP. It remains bound to the aminoacyl-tRNA.EF-Tu.GTP complex up to the GTP hydrolysis stage on the ribosome. This is Elongation factor Ts (tsf) from Bacillus subtilis (strain 168).